A 420-amino-acid chain; its full sequence is Vitellogenin-3 (420 aa).

The signal sequence occupies residues 1 to 19 (MMSLRICLLATCLLVAAHA). At threonine 37 the chain carries Phosphothreonine. Phosphoserine is present on residues serine 177 and serine 178. 2 positions are modified to sulfotyrosine: tyrosine 384 and tyrosine 390. The segment at 401–420 (GQRSPAHKQAAYHGMHHAQN) is disordered.

Belongs to the AB hydrolase superfamily. Lipase family. Tyrosine sulfation occurs in the female only and plays an essential functional role. Synthesized in the fat body and ovarian follicle cells and accumulate in the oocyte.

The protein localises to the secreted. Vitellogenin is the major yolk protein of eggs where it is used as a food source during embryogenesis. Vitellogenins and their receptor yl/yolkless are required for maintenance of microtubule plus-end orientation towards the posterior pole of oocytes. Involved in polarized localization of germ plasm components, such as osk mRNA and vas protein, to the oocyte posterior cortex. Receptor-mediated endocytosis by yl/yolkless is crucial for actin reorganization, mediated by osk isoform A/Long, required to anchor germ plasm components to the oocyte cortex. This Drosophila melanogaster (Fruit fly) protein is Vitellogenin-3 (Yp3).